The primary structure comprises 207 residues: Protein GET1 (207 aa).

Residues 1–4 are Lumenal-facing; the sequence is MPSL. A helical membrane pass occupies residues 5–24; it reads LISVLFLHIAIYIINTIAAS. The Cytoplasmic portion of the chain corresponds to 25–110; that stretch reads TIDSLLWLIY…FFDVAVKALR (86 aa). The stretch at 44 to 97 forms a coiled coil; it reads IAREQHQMKLEVVQLKREMNATSSQDEFAKWAKLRRRHDKALEEYEVKNKQFSR. Residues 111–131 traverse the membrane as a helical segment; the sequence is WAGTSGLIVFLQFWFSKTPIF. Over 132 to 155 the chain is Lumenal; it reads TLPPSWIPWQVEWVLSFPRAPMGT. Residues 156 to 172 traverse the membrane as a helical segment; sequence VSIQVWGGACAVVVALI. The Cytoplasmic segment spans residues 173-207; the sequence is GEAIGATVRYLYASKDSMEAIKVGAGAVEKEKKRQ.

It belongs to the WRB/GET1 family. As to quaternary structure, interacts with GET3.

It is found in the endoplasmic reticulum membrane. Functionally, required for the post-translational delivery of tail-anchored (TA) proteins to the endoplasmic reticulum. Acts as a membrane receptor for soluble GET3, which recognizes and selectively binds the transmembrane domain of TA proteins in the cytosol. This is Protein GET1 from Paracoccidioides brasiliensis (strain Pb18).